The sequence spans 639 residues: PTS-dependent dihydroxyacetone kinase operon regulatory protein (639 aa).

The segment at 1-318 (MSGAFNNDGR…MRQLMTSQLG (318 aa)) is sensor domain. One can recognise a GAF domain in the interval 52–189 (AMLTLGQAAL…AIAREVGNLL (138 aa)). Residues 203–265 (NQLNALLESM…AVLQQAIKQA (63 aa)) enclose the PAS domain. The 226-residue stretch at 327–552 (MPQDDPQTRR…LYSVIENLAL (226 aa)) folds into the Sigma-54 factor interaction domain. ATP-binding positions include 355-362 (GEEGVGKA) and 415-424 (AHGGTLFLEK).

In terms of assembly, homodimer. DhaR forms complexes with DhaK and DhaL-ADP.

In terms of biological role, positively regulates the dhaKLM operon from a sigma-70 promoter. Represses its own expression. The sequence is that of PTS-dependent dihydroxyacetone kinase operon regulatory protein from Escherichia coli (strain K12).